The following is a 271-amino-acid chain: 3-methyl-2-oxobutanoate hydroxymethyltransferase (271 aa).

Mg(2+) contacts are provided by aspartate 53 and aspartate 92. Residues 53–54 (DS), aspartate 92, and lysine 120 each bind 3-methyl-2-oxobutanoate. A Mg(2+)-binding site is contributed by glutamate 122. Catalysis depends on glutamate 189, which acts as the Proton acceptor.

Belongs to the PanB family. Homodecamer; pentamer of dimers. Requires Mg(2+) as cofactor.

It localises to the cytoplasm. It carries out the reaction 3-methyl-2-oxobutanoate + (6R)-5,10-methylene-5,6,7,8-tetrahydrofolate + H2O = 2-dehydropantoate + (6S)-5,6,7,8-tetrahydrofolate. It functions in the pathway cofactor biosynthesis; (R)-pantothenate biosynthesis; (R)-pantoate from 3-methyl-2-oxobutanoate: step 1/2. In terms of biological role, catalyzes the reversible reaction in which hydroxymethyl group from 5,10-methylenetetrahydrofolate is transferred onto alpha-ketoisovalerate to form ketopantoate. This Paraburkholderia xenovorans (strain LB400) protein is 3-methyl-2-oxobutanoate hydroxymethyltransferase.